The sequence spans 236 residues: Thrombin-like enzyme kangshuanmei (236 aa).

A Peptidase S1 domain is found at 1-227 (VIGGDECNIN…HLDWIQSIIA (227 aa)). 6 cysteine pairs are disulfide-bonded: Cys-7–Cys-141, Cys-28–Cys-44, Cys-78–Cys-234, Cys-120–Cys-188, Cys-152–Cys-167, and Cys-178–Cys-203. His-43 (charge relay system) is an active-site residue. Residue Asn-81 is glycosylated (N-linked (GlcNAc...) asparagine). Asp-88 (charge relay system) is an active-site residue. Residues Asn-99 and Asn-148 are each glycosylated (N-linked (GlcNAc...) asparagine). The active-site Charge relay system is the Ser-182. An N-linked (GlcNAc...) asparagine glycan is attached at Asn-229.

This sequence belongs to the peptidase S1 family. Snake venom subfamily. In terms of assembly, monomer. In terms of processing, N-glycosylated by units composed of Fuc, Man, GlcNAc, Gal and NeuAC residues. In terms of tissue distribution, expressed by the venom gland.

It localises to the secreted. Its activity is regulated as follows. Inhibited by 4-(2-aminoethyl)-benzensulfonyl fluoride. Not inhibited by antithrombin-III. Functionally, thrombin-like snake venom serine protease. Cleaves bonds after Arg and Lys, converts fibrinogen (FGA and FGB) to fibrin and releases both fibrinopeptides A and B, and fibrinogen peptide Bbeta1-42. Has a blood clotting activity. In Gloydius brevicauda (Korean slamosa snake), this protein is Thrombin-like enzyme kangshuanmei.